We begin with the raw amino-acid sequence, 254 residues long: Nickel import ATP-binding protein NikD (254 aa).

One can recognise an ABC transporter domain in the interval 2–241 (PQQIELRNIA…PKHTVTRSLV (240 aa)). Position 36-43 (36-43 (GGSGSGKS)) interacts with ATP.

It belongs to the ABC transporter superfamily. Nickel importer (TC 3.A.1.5.3) family. In terms of assembly, the complex is composed of two ATP-binding proteins (NikD and NikE), two transmembrane proteins (NikB and NikC) and a solute-binding protein (NikA).

The protein localises to the cell inner membrane. The catalysed reaction is Ni(2+)(out) + ATP + H2O = Ni(2+)(in) + ADP + phosphate + H(+). In terms of biological role, part of the ABC transporter complex NikABCDE involved in nickel import. Responsible for energy coupling to the transport system. The sequence is that of Nickel import ATP-binding protein NikD from Shigella boydii serotype 4 (strain Sb227).